A 349-amino-acid chain; its full sequence is Succinylglutamate desuccinylase (349 aa).

The Zn(2+) site is built by histidine 70, glutamate 73, and histidine 166. Glutamate 229 is an active-site residue.

This sequence belongs to the AspA/AstE family. Succinylglutamate desuccinylase subfamily. Zn(2+) is required as a cofactor.

It catalyses the reaction N-succinyl-L-glutamate + H2O = L-glutamate + succinate. It participates in amino-acid degradation; L-arginine degradation via AST pathway; L-glutamate and succinate from L-arginine: step 5/5. Functionally, transforms N(2)-succinylglutamate into succinate and glutamate. This is Succinylglutamate desuccinylase from Burkholderia thailandensis (strain ATCC 700388 / DSM 13276 / CCUG 48851 / CIP 106301 / E264).